Reading from the N-terminus, the 252-residue chain is uncharacterized protein (252 aa).

Residue 9 to 33 (LITGGSAGIGLELAKRLLELGNEVI) participates in NADP(+) binding. Ser-139 serves as a coordination point for substrate. The active-site Proton acceptor is Tyr-152.

The protein belongs to the short-chain dehydrogenases/reductases (SDR) family.

It is found in the cytoplasm. This is an uncharacterized protein from Bacillus subtilis (strain 168).